A 244-amino-acid polypeptide reads, in one-letter code: Probable 2-phosphosulfolactate phosphatase (244 aa).

Belongs to the ComB family. The cofactor is Mg(2+).

It catalyses the reaction (2R)-O-phospho-3-sulfolactate + H2O = (2R)-3-sulfolactate + phosphate. This is Probable 2-phosphosulfolactate phosphatase from Cyanothece sp. (strain PCC 7425 / ATCC 29141).